Consider the following 362-residue polypeptide: Phosphoserine aminotransferase (362 aa).

Arg-42 contributes to the L-glutamate binding site. Pyridoxal 5'-phosphate-binding positions include 76-77 (AS), Trp-102, Thr-152, Asp-173, and Gln-196. N6-(pyridoxal phosphate)lysine is present on Lys-197. Position 238–239 (238–239 (NT)) interacts with pyridoxal 5'-phosphate.

Belongs to the class-V pyridoxal-phosphate-dependent aminotransferase family. SerC subfamily. Homodimer. Pyridoxal 5'-phosphate is required as a cofactor.

It is found in the cytoplasm. The catalysed reaction is O-phospho-L-serine + 2-oxoglutarate = 3-phosphooxypyruvate + L-glutamate. It catalyses the reaction 4-(phosphooxy)-L-threonine + 2-oxoglutarate = (R)-3-hydroxy-2-oxo-4-phosphooxybutanoate + L-glutamate. Its pathway is amino-acid biosynthesis; L-serine biosynthesis; L-serine from 3-phospho-D-glycerate: step 2/3. The protein operates within cofactor biosynthesis; pyridoxine 5'-phosphate biosynthesis; pyridoxine 5'-phosphate from D-erythrose 4-phosphate: step 3/5. Its function is as follows. Catalyzes the reversible conversion of 3-phosphohydroxypyruvate to phosphoserine and of 3-hydroxy-2-oxo-4-phosphonooxybutanoate to phosphohydroxythreonine. This Chromobacterium violaceum (strain ATCC 12472 / DSM 30191 / JCM 1249 / CCUG 213 / NBRC 12614 / NCIMB 9131 / NCTC 9757 / MK) protein is Phosphoserine aminotransferase.